The primary structure comprises 562 residues: Non-homologous end joining factor IFFO1 (562 aa).

Positions 65-116 (ALRNDLGSNINVLKTLNLRFRCFLAKVHELERRNRLLEKQLQQALEEGKQGR) are LMNA binding. Positions 73-529 (NINVLKTLNL…RLITQSGDRK (457 aa)) constitute an IF rod domain. Residues 85 to 117 (RCFLAKVHELERRNRLLEKQLQQALEEGKQGRR) adopt a coiled-coil conformation. A disordered region spans residues 154 to 187 (RVLGSPSRSPAGPLASSAACHTSSSTSTSTAFSS). Positions 168-187 (ASSAACHTSSSTSTSTAFSS) are enriched in low complexity. Residues 237–301 (EIRALYNVLA…MKVEQLKAEL (65 aa)) are a coiled coil. The segment at 364-401 (MGGRKRERKAAVEEDTSLSESDGPRQPEGAEEESTALS) is disordered. The segment at 453-528 (EQEDSLEKVI…RRLITQSGDR (76 aa)) is XCCR4 binding. Required for localization to the double-strand breaks (DSBs). Residues 458–504 (LEKVIKDTESLFKTREKEYQETIDQIELELATAKNDMNRHLHEYMEM) adopt a coiled-coil conformation. Residues 523-562 (TQSGDRKSPAFTAVPLSDPPPPPSETEDSDRDVSSDSSMR) form a disordered region. Over residues 553 to 562 (RDVSSDSSMR) the composition is skewed to basic and acidic residues.

It belongs to the intermediate filament family. In terms of assembly, forms a heterotetramer with XRCC4. The interaction with XRCC4 is direct, involves LIG4-free XRCC4 and leads to relocalization of IFFO1 at the double-strand break (DSB) sites. Interacts with LMNA; the interaction forms an interior nucleoskeleton and the recruitment to DNA double-strand breaks.

It is found in the nucleus. It localises to the nucleoplasm. The protein resides in the nucleus inner membrane. Its subcellular location is the nucleus matrix. In terms of biological role, nuclear matrix protein involved in the immobilization of broken DNA ends and the suppression of chromosome translocation during DNA double-strand breaks (DSBs). Interacts with the nuclear lamina component LMNA, resulting in the formation of a nucleoskeleton that will relocalize to the DSB sites in a XRCC4-dependent manner and promote the immobilization of the broken ends, thereby preventing chromosome translocation. Acts as a scaffold that allows the DNA repair protein XRCC4 and LMNA to assemble into a complex at the DSB sites. The protein is Non-homologous end joining factor IFFO1 of Mus musculus (Mouse).